Consider the following 88-residue polypeptide: Mitochondrial import inner membrane translocase subunit Tim10 (88 aa).

The short motif at Cys-29–Cys-54 is the Twin CX3C motif element. 2 disulfides stabilise this stretch: Cys-29-Cys-54 and Cys-33-Cys-50.

The protein belongs to the small Tim family. In terms of assembly, heterohexamer; composed of 3 copies of TIMM9 and 3 copies of TIMM10/TIM10A, named soluble 70 kDa complex. The complex forms a 6-bladed alpha-propeller structure and associates with the TIMM22 component of the TIM22 complex. Interacts with multi-pass transmembrane proteins in transit.

The protein localises to the mitochondrion inner membrane. Functionally, mitochondrial intermembrane chaperone that participates in the import and insertion of multi-pass transmembrane proteins into the mitochondrial inner membrane. May also be required for the transfer of beta-barrel precursors from the TOM complex to the sorting and assembly machinery (SAM complex) of the outer membrane. Acts as a chaperone-like protein that protects the hydrophobic precursors from aggregation and guide them through the mitochondrial intermembrane space. This Danio rerio (Zebrafish) protein is Mitochondrial import inner membrane translocase subunit Tim10 (timm10).